Consider the following 377-residue polypeptide: Prostaglandin E synthase 2 (377 aa).

The Lumenal segment spans residues 1 to 65 (MAAACTRTLG…LAAPVRGSGR (65 aa)). Residues 66–83 (VLGCAFLLGGGFGLYQTI) form a helical membrane-spanning segment. The GST N-terminal domain occupies 105-182 (LKLTLYQYKT…ALKTYISSKD (78 aa)). Residues Val-153 and 166-167 (DS) each bind glutathione. Residues 266 to 377 (YIVREGKFGS…RMQKATQHVS (112 aa)) form the GST C-terminal domain.

It belongs to the GST superfamily. In terms of assembly, homodimer.

The protein localises to the golgi apparatus membrane. It carries out the reaction prostaglandin H2 = prostaglandin E2. The enzyme catalyses prostaglandin H2 = (12S)-hydroxy-(5Z,8E,10E)-heptadecatrienoate + malonaldehyde. It functions in the pathway lipid metabolism; prostaglandin biosynthesis. With respect to regulation, isomerase activity is increased by sulfhydril compounds. Dithiothreitol (DTT) is most effective, followed by glutathione (GSH) and 2-mercaptoethanol. Its function is as follows. Isomerase that catalyzes the conversion of PGH2 into the more stable prostaglandin E2 (PGE2) (in vitro). The biological function and the GSH-dependent property of PTGES2 is still under debate. In vivo, PTGES2 could form a complex with GSH and heme and would not participate in PGE2 synthesis but would catalyze the degradation of prostaglandin E2 H2 (PGH2) to 12(S)-hydroxy-5(Z),8(E),10(E)-heptadecatrienoic acid (HHT) and malondialdehyde (MDA). The protein is Prostaglandin E synthase 2 (ptges2) of Danio rerio (Zebrafish).